The following is a 214-amino-acid chain: Adenylate kinase (214 aa).

Glycine 10–threonine 15 lines the ATP pocket. The interval serine 30 to valine 59 is NMP. AMP-binding positions include threonine 31, arginine 36, lysine 57–valine 59, glycine 85–arginine 88, and glutamine 92. Positions glycine 122–aspartate 159 are LID. Residues arginine 123 and valine 132–tyrosine 133 contribute to the ATP site. AMP-binding residues include arginine 156 and arginine 167. Position 192 is an N6-acetyllysine (lysine 192). Lysine 200 is an ATP binding site.

This sequence belongs to the adenylate kinase family. In terms of assembly, monomer.

It is found in the cytoplasm. It catalyses the reaction AMP + ATP = 2 ADP. It participates in purine metabolism; AMP biosynthesis via salvage pathway; AMP from ADP: step 1/1. Functionally, catalyzes the reversible transfer of the terminal phosphate group between ATP and AMP. Plays an important role in cellular energy homeostasis and in adenine nucleotide metabolism. The chain is Adenylate kinase from Escherichia coli O8 (strain IAI1).